A 311-amino-acid polypeptide reads, in one-letter code: Glycerol-3-phosphate dehydrogenase [NAD(P)+] (311 aa).

4 residues coordinate NADPH: W12, R31, R32, and K96. Sn-glycerol 3-phosphate-binding residues include K96, G124, and S126. Residue A128 coordinates NADPH. The sn-glycerol 3-phosphate site is built by K178, D231, S241, R242, and N243. K178 functions as the Proton acceptor in the catalytic mechanism. Residue R242 coordinates NADPH. Residues V266 and E268 each coordinate NADPH.

It belongs to the NAD-dependent glycerol-3-phosphate dehydrogenase family.

The protein resides in the cytoplasm. It carries out the reaction sn-glycerol 3-phosphate + NAD(+) = dihydroxyacetone phosphate + NADH + H(+). The catalysed reaction is sn-glycerol 3-phosphate + NADP(+) = dihydroxyacetone phosphate + NADPH + H(+). It functions in the pathway membrane lipid metabolism; glycerophospholipid metabolism. Its function is as follows. Catalyzes the reduction of the glycolytic intermediate dihydroxyacetone phosphate (DHAP) to sn-glycerol 3-phosphate (G3P), the key precursor for phospholipid synthesis. The chain is Glycerol-3-phosphate dehydrogenase [NAD(P)+] from Helicobacter hepaticus (strain ATCC 51449 / 3B1).